The sequence spans 634 residues: Chaperone protein HtpG (634 aa).

The interval 1–344 (MNETVANNKE…SNDLPLNVSR (344 aa)) is a; substrate-binding. The tract at residues 345–561 (EILQDNKVTQ…DFEMGTQMAK (217 aa)) is b. Residues 562 to 634 (LLAAAGQAVP…TAINSLLTKG (73 aa)) are c.

This sequence belongs to the heat shock protein 90 family. Homodimer.

It is found in the cytoplasm. Functionally, molecular chaperone. Has ATPase activity. This chain is Chaperone protein HtpG, found in Vibrio vulnificus (strain CMCP6).